Reading from the N-terminus, the 156-residue chain is Egg-lysin (156 aa).

Residues 1-18 form the signal peptide; sequence MKLLVLCVFAMMATLAVS.

As to quaternary structure, monomer. Homodimer. Molecules associate into dimers and then rapidly dissociate again. Interacts (as a monomer) with the egg vitelline layer protein VERL (via VERL repeats); each VERL chain can bind multiple copies of lysin. As to expression, sperm.

The protein resides in the cytoplasmic vesicle. It is found in the secretory vesicle. The protein localises to the acrosome lumen. Functionally, creates a 3 um hole in the egg vitelline layer through which the sperm passes. Does not have enzyme activity. Species-specific interaction between the sperm protein lysin and the egg protein VERL exposes a basic surface on lysin that may dissociate the egg vitelline layer via electrostatic repulsion. Plays a role in ensuring species-specific fertilization. This Haliotis cracherodii (Black abalone) protein is Egg-lysin.